A 438-amino-acid polypeptide reads, in one-letter code: Alkylcitrate synthase tstJ (438 aa).

Catalysis depends on residues His-309 and Asp-365.

Belongs to the citrate synthase family.

The catalysed reaction is (2E,10E)-dode-2,10-dicenoyl-CoA + oxaloacetate + H2O = (4E,11E)-2-hydroxytrideca-4,11-dien-1,2,3-tricarboxylate + CoA + H(+). Its pathway is secondary metabolite biosynthesis. Alkylcitrate synthase; part of the gene cluster that mediates the biosynthesis of the antihypercholesterolemic agents phomoidrides which are dimeric anhydrides. Within the pathway, the alkylcitrate synthase (ACS) tstJ and the alkylcitrate dehydratase (ACDH) tstI produce the decarboxylated monomeric anhydrides by coupling the C12-fatty acyl product from phiA with oxalacetic acid. The pathway begins with the highly reducing polyketide synthase tstA that catalyzes the formation of a C12-fatty acyl-ACP, starting from one acetate and 5 malonate units. The hydrolase tstM is involved in the release of the C12-fatty acyl chain from phiA. The alkylcitrate synthase (ACS) tstJ and the alkylcitrate dehydratase (ACDH) tstI then give rise to decarboxylated monomeric anhydrides by coupling the C12-fatty acyl chain with oxalacetic acid. The cyclase tstC is responsible for the dimerization of the monomeric anhydrides which leads to the production of prephomoidride that contains the characteristic bicyclo[4.3.1]deca-1,6-diene system of phomoidrides. Iterative oxidation catalyzed by the alpha-ketoglutarate-dependent dioxygenase tstK produced then phomoidride A. Finally, the methyltransferase tstE converts phomoidride A to phomoidride B via an acetalization reaction. The phosphatidylethanolamine-binding protein tstB and tstN are not essential for dimerization and their functions have still to be determined. This is Alkylcitrate synthase tstJ from Talaromyces stipitatus (strain ATCC 10500 / CBS 375.48 / QM 6759 / NRRL 1006) (Penicillium stipitatum).